A 509-amino-acid polypeptide reads, in one-letter code: 2,3-bisphosphoglycerate-independent phosphoglycerate mutase (509 aa).

Mn(2+) contacts are provided by Asp14 and Ser64. Residue Ser64 is the Phosphoserine intermediate of the active site. Residues His125, 155–156 (RD), Arg187, Arg193, 259–262 (RADR), and Lys332 contribute to the substrate site. Mn(2+) contacts are provided by Asp399, His403, Asp440, His441, and His459.

This sequence belongs to the BPG-independent phosphoglycerate mutase family. As to quaternary structure, monomer. Requires Mn(2+) as cofactor.

It carries out the reaction (2R)-2-phosphoglycerate = (2R)-3-phosphoglycerate. It participates in carbohydrate degradation; glycolysis; pyruvate from D-glyceraldehyde 3-phosphate: step 3/5. Functionally, catalyzes the interconversion of 2-phosphoglycerate and 3-phosphoglycerate. The sequence is that of 2,3-bisphosphoglycerate-independent phosphoglycerate mutase from Psychromonas ingrahamii (strain DSM 17664 / CCUG 51855 / 37).